Consider the following 578-residue polypeptide: Protein O-linked-mannose beta-1,4-N-acetylglucosaminyltransferase 2 (578 aa).

Over 1-4 the chain is Cytoplasmic; sequence MNLP. A helical; Signal-anchor for type II membrane protein membrane pass occupies residues 5–25; the sequence is AVLNGLLVSVVAALLWKYVRL. At 26–578 the chain is on the lumenal side; it reads VEHTSQLEEE…PFADVLICKT (553 aa). N-linked (GlcNAc...) asparagine glycosylation is found at Asn98, Asn275, and Asn541. The 97-residue stretch at 482–578 folds into the Fibronectin type-III domain; it reads RVREPKCQTS…PFADVLICKT (97 aa).

Belongs to the glycosyltransferase 61 family.

It localises to the endoplasmic reticulum membrane. It carries out the reaction 3-O-(alpha-D-mannosyl)-L-threonyl-[protein] + UDP-N-acetyl-alpha-D-glucosamine = 3-O-(N-acetyl-beta-D-glucosaminyl-(1-&gt;4)-alpha-D-mannosyl)-L-threonyl-[protein] + UDP + H(+). Its pathway is protein modification; protein glycosylation. In terms of biological role, O-linked mannose beta-1,4-N-acetylglucosaminyltransferase that transfers UDP-N-acetyl-D-glucosamine to the 4-position of the mannose to generate N-acetyl-D-glucosamine-beta-1,4-O-D-mannosylprotein. Involved in the biosynthesis of the phosphorylated O-mannosyl trisaccharide (N-acetylgalactosamine-beta-3-N-acetylglucosamine-beta-4-(phosphate-6-)mannose), a carbohydrate structure present in alpha-dystroglycan (DAG1), which is required for binding laminin G-like domain-containing extracellular proteins with high affinity. The chain is Protein O-linked-mannose beta-1,4-N-acetylglucosaminyltransferase 2 (pomgnt2) from Danio rerio (Zebrafish).